The primary structure comprises 271 residues: MEAEGLGWLLVPLHQLVSWVAAGAMVFGGVVPYIPQYRDIRRTQNADGFSTHVCLVLLVANILRILFWFGRHFESPLLWQSIVMILTMLLMLKLCTEVRVANELNVKRRSFAATDSKDEELRVPPRRPYLDFDPHHFWHWSSFADYVQCVLAFTGVAGYITYLSIDSALFVETLGFLAVLTEAMLGVPQLYRNYRHRSTEGMSLKMVLMWTSGDTFKTAYFLLNGAPLQFSVCGLLQVMVDLAILGQAYAFAHHPQKPAPHAVHPASAKAL.

Helical transmembrane passes span glycine 7 to phenylalanine 27, phenylalanine 49 to phenylalanine 69, and histidine 72 to leucine 92. The 67-residue stretch at histidine 14 to glutamine 80 folds into the PQ-loop 1 domain. Phosphoserine is present on serine 110. Helical transmembrane passes span phenylalanine 143–leucine 163, alanine 168–proline 188, and valine 232–alanine 252. In terms of domain architecture, PQ-loop 2 spans cysteine 149–threonine 215.

The protein resides in the membrane. The protein is Solute carrier family 66 member 2 (Slc66a2) of Rattus norvegicus (Rat).